The following is a 245-amino-acid chain: Ribonuclease PH (245 aa).

Phosphate contacts are provided by residues arginine 86 and 124–126; that span reads GTR.

It belongs to the RNase PH family. As to quaternary structure, homohexameric ring arranged as a trimer of dimers.

The enzyme catalyses tRNA(n+1) + phosphate = tRNA(n) + a ribonucleoside 5'-diphosphate. Phosphorolytic 3'-5' exoribonuclease that plays an important role in tRNA 3'-end maturation. Removes nucleotide residues following the 3'-CCA terminus of tRNAs; can also add nucleotides to the ends of RNA molecules by using nucleoside diphosphates as substrates, but this may not be physiologically important. Probably plays a role in initiation of 16S rRNA degradation (leading to ribosome degradation) during starvation. The sequence is that of Ribonuclease PH from Bacillus cereus (strain G9842).